Reading from the N-terminus, the 180-residue chain is Immediate early response gene 2 protein (180 aa).

Positions 53–135 are disordered; that stretch reads MSEKSGQSVT…KRRSKTATDS (83 aa). The segment covering 56-92 has biased composition (polar residues); it reads KSGQSVTEECTSHTQEPMDTSSSTATPLRETSGQSSE. Basic and acidic residues predominate over residues 93–103; it reads DGQRSGLEGHP.

The protein belongs to the IER family. As to quaternary structure, interacts with FIBPB.

It localises to the nucleus. The protein localises to the cytoplasm. Its function is as follows. DNA-binding protein that seems to act as a transcription factor. Mediates with FIBPB FGF-signaling in Kupffer's vesicle ciliogenesis and in the establishment of laterality in the embryo. This chain is Immediate early response gene 2 protein, found in Danio rerio (Zebrafish).